The following is a 443-amino-acid chain: Tol-Pal system protein TolB (443 aa).

The N-terminal stretch at 1 to 31 (MTRLAKGKWRSTLGAMMALAVMVAAIPQARA) is a signal peptide. Over residues 423–432 (NERQISTPTE) the composition is skewed to polar residues. A disordered region spans residues 423 to 443 (NERQISTPTEASDPAWSPLLP).

It belongs to the TolB family. In terms of assembly, the Tol-Pal system is composed of five core proteins: the inner membrane proteins TolA, TolQ and TolR, the periplasmic protein TolB and the outer membrane protein Pal. They form a network linking the inner and outer membranes and the peptidoglycan layer.

The protein resides in the periplasm. Part of the Tol-Pal system, which plays a role in outer membrane invagination during cell division and is important for maintaining outer membrane integrity. This is Tol-Pal system protein TolB from Rhodospirillum rubrum (strain ATCC 11170 / ATH 1.1.1 / DSM 467 / LMG 4362 / NCIMB 8255 / S1).